The chain runs to 212 residues: Large ribosomal subunit protein uL3 (212 aa).

The interval 134–155 (RNSHGNSLSHRAPGSIGQNQSP) is disordered. Gln-153 is modified (N5-methylglutamine).

Belongs to the universal ribosomal protein uL3 family. Part of the 50S ribosomal subunit. Forms a cluster with proteins L14 and L19. In terms of processing, methylated by PrmB.

One of the primary rRNA binding proteins, it binds directly near the 3'-end of the 23S rRNA, where it nucleates assembly of the 50S subunit. The protein is Large ribosomal subunit protein uL3 of Pseudoalteromonas atlantica (strain T6c / ATCC BAA-1087).